The chain runs to 134 residues: Putative pre-16S rRNA nuclease (134 aa).

This sequence belongs to the YqgF nuclease family.

It localises to the cytoplasm. Functionally, could be a nuclease involved in processing of the 5'-end of pre-16S rRNA. The chain is Putative pre-16S rRNA nuclease from Helicobacter pylori (strain ATCC 700392 / 26695) (Campylobacter pylori).